We begin with the raw amino-acid sequence, 427 residues long: Glutamate-1-semialdehyde 2,1-aminomutase (427 aa).

Lysine 265 bears the N6-(pyridoxal phosphate)lysine mark.

This sequence belongs to the class-III pyridoxal-phosphate-dependent aminotransferase family. HemL subfamily. As to quaternary structure, homodimer. Pyridoxal 5'-phosphate is required as a cofactor.

It localises to the cytoplasm. It carries out the reaction (S)-4-amino-5-oxopentanoate = 5-aminolevulinate. It participates in porphyrin-containing compound metabolism; protoporphyrin-IX biosynthesis; 5-aminolevulinate from L-glutamyl-tRNA(Glu): step 2/2. The polypeptide is Glutamate-1-semialdehyde 2,1-aminomutase (Bordetella petrii (strain ATCC BAA-461 / DSM 12804 / CCUG 43448)).